A 205-amino-acid chain; its full sequence is Pectinesterase inhibitor 3 (205 aa).

Positions 1–25 (MAPTQNLFLVAIAFAVIFTASTVHG) are cleaved as a signal peptide. 2 disulfide bridges follow: cysteine 38–cysteine 47 and cysteine 104–cysteine 156.

This sequence belongs to the PMEI family. Expressed in apical meristem.

The protein resides in the secreted. It is found in the extracellular space. It localises to the apoplast. In terms of biological role, pectin methylesterase (PME) inhibitor that can target PMEs (e.g. PME2 and PME3) in a pH-dependent manner, mainly in slightly acidic conditions (pH 6.3 and 5.0) but not at pH 7.5; this processus relies on changes in the protonation of amino acids involved in intermolecular and intramolecular interactions. Regulates de-methylesterification of pectins in the apical meristem and affects primordia formation and phyllotactic patterning. The protein is Pectinesterase inhibitor 3 of Arabidopsis thaliana (Mouse-ear cress).